We begin with the raw amino-acid sequence, 968 residues long: Phosphoenolpyruvate carboxylase 3 (968 aa).

At Ser-11 the chain carries Phosphoserine. Catalysis depends on residues His-173 and Lys-603. Position 705 is a phosphoserine (Ser-705).

This sequence belongs to the PEPCase type 1 family. As to quaternary structure, homotetramer. The cofactor is Mg(2+). As to expression, expressed in roots and siliques, and to a lower extent in stems, leaves and flowers.

The protein localises to the cytoplasm. It carries out the reaction oxaloacetate + phosphate = phosphoenolpyruvate + hydrogencarbonate. By light-reversible phosphorylation. Functionally, through the carboxylation of phosphoenolpyruvate (PEP) it forms oxaloacetate, a four-carbon dicarboxylic acid source for the tricarboxylic acid cycle. The chain is Phosphoenolpyruvate carboxylase 3 (PPC3) from Arabidopsis thaliana (Mouse-ear cress).